The chain runs to 558 residues: Dihydroxy-acid dehydratase (558 aa).

Asp-78 is a Mg(2+) binding site. Cys-119 is a [2Fe-2S] cluster binding site. Mg(2+) is bound by residues Asp-120 and Lys-121. Lys-121 bears the N6-carboxylysine mark. Cys-192 serves as a coordination point for [2Fe-2S] cluster. Glu-445 contacts Mg(2+). Ser-471 functions as the Proton acceptor in the catalytic mechanism.

Belongs to the IlvD/Edd family. Homodimer. [2Fe-2S] cluster serves as cofactor. Mg(2+) is required as a cofactor.

It catalyses the reaction (2R)-2,3-dihydroxy-3-methylbutanoate = 3-methyl-2-oxobutanoate + H2O. It carries out the reaction (2R,3R)-2,3-dihydroxy-3-methylpentanoate = (S)-3-methyl-2-oxopentanoate + H2O. It participates in amino-acid biosynthesis; L-isoleucine biosynthesis; L-isoleucine from 2-oxobutanoate: step 3/4. Its pathway is amino-acid biosynthesis; L-valine biosynthesis; L-valine from pyruvate: step 3/4. Functions in the biosynthesis of branched-chain amino acids. Catalyzes the dehydration of (2R,3R)-2,3-dihydroxy-3-methylpentanoate (2,3-dihydroxy-3-methylvalerate) into 2-oxo-3-methylpentanoate (2-oxo-3-methylvalerate) and of (2R)-2,3-dihydroxy-3-methylbutanoate (2,3-dihydroxyisovalerate) into 2-oxo-3-methylbutanoate (2-oxoisovalerate), the penultimate precursor to L-isoleucine and L-valine, respectively. In Akkermansia muciniphila (strain ATCC BAA-835 / DSM 22959 / JCM 33894 / BCRC 81048 / CCUG 64013 / CIP 107961 / Muc), this protein is Dihydroxy-acid dehydratase.